The following is a 364-amino-acid chain: Dihydroorotate dehydrogenase (quinone) (364 aa).

FMN-binding positions include 61-65 and threonine 85; that span reads AGFDK. Lysine 65 is a substrate binding site. 110–114 is a substrate binding site; it reads NRMGF. Residues asparagine 139 and asparagine 170 each coordinate FMN. Asparagine 170 contacts substrate. The Nucleophile role is filled by serine 173. Asparagine 175 is a binding site for substrate. The FMN site is built by lysine 214 and alanine 242. Residue 243 to 244 coordinates substrate; sequence NT. Residues glycine 266, glycine 295, and 316–317 contribute to the FMN site; that span reads YS.

This sequence belongs to the dihydroorotate dehydrogenase family. Type 2 subfamily. As to quaternary structure, monomer. FMN serves as cofactor.

The protein resides in the cell membrane. The catalysed reaction is (S)-dihydroorotate + a quinone = orotate + a quinol. It participates in pyrimidine metabolism; UMP biosynthesis via de novo pathway; orotate from (S)-dihydroorotate (quinone route): step 1/1. Functionally, catalyzes the conversion of dihydroorotate to orotate with quinone as electron acceptor. The sequence is that of Dihydroorotate dehydrogenase (quinone) from Rhodopseudomonas palustris (strain TIE-1).